A 168-amino-acid chain; its full sequence is Protein C2-DOMAIN ABA-RELATED 1 (168 aa).

Residue Met-1 is modified to N-acetylmethionine. The C2 domain maps to Met-1 to Gly-104. Ca(2+)-binding residues include Arg-21, Asp-22, Asp-27, Asp-73, Tyr-74, Asp-75, and Asp-81.

This sequence belongs to the plant CAR protein family. In terms of assembly, dimers and oligomers. Binds to PYR/PYL/RCAR abscisic acid intracellular receptors in an ABA-independent manner, both at the plasma membrane and in the nucleus. Interacts directly with PYR1, PYL1, PYL4, PYL6 and PYL8. Binds phospholipids in a Ca(2+)-dependent manner. Requires Ca(2+) as cofactor. As to expression, expressed in roots.

Its subcellular location is the cell membrane. The protein resides in the nucleus. In terms of biological role, stimulates the GTPase/ATPase activities of Obg-like ATPases. Mediates the transient calcium-dependent interaction of PYR/PYL/RCAR abscisic acid (ABA) receptors with the plasma membrane and thus regulates ABA sensitivity. Binds liposomes in the absence of exogenous Ca(2+), but this activity is enhanced in the presence of Ca(2+) and generates membrane curvature. The protein is Protein C2-DOMAIN ABA-RELATED 1 of Arabidopsis thaliana (Mouse-ear cress).